Consider the following 239-residue polypeptide: Transcriptional regulatory protein BtsR (239 aa).

The Response regulatory domain occupies 3–116; that stretch reads KVLIVDDEPL…RLEKTLHRLR (114 aa). A 4-aspartylphosphate modification is found at D54. The 103-residue stretch at 137 to 239 folds into the HTH LytTR-type domain; it reads IPCTGHSRIY…LKSLKEAIGL (103 aa).

Post-translationally, phosphorylated by BtsS.

Its function is as follows. Member of the two-component regulatory system BtsS/BtsR. BtsR regulates expression of btsT by binding to its promoter region. This chain is Transcriptional regulatory protein BtsR, found in Salmonella typhi.